The chain runs to 321 residues: Lipoyl synthase (321 aa).

Positions 68, 73, 79, 94, 98, 101, and 308 each coordinate [4Fe-4S] cluster. The 218-residue stretch at phenylalanine 80–threonine 297 folds into the Radical SAM core domain.

It belongs to the radical SAM superfamily. Lipoyl synthase family. The cofactor is [4Fe-4S] cluster.

It is found in the cytoplasm. It catalyses the reaction [[Fe-S] cluster scaffold protein carrying a second [4Fe-4S](2+) cluster] + N(6)-octanoyl-L-lysyl-[protein] + 2 oxidized [2Fe-2S]-[ferredoxin] + 2 S-adenosyl-L-methionine + 4 H(+) = [[Fe-S] cluster scaffold protein] + N(6)-[(R)-dihydrolipoyl]-L-lysyl-[protein] + 4 Fe(3+) + 2 hydrogen sulfide + 2 5'-deoxyadenosine + 2 L-methionine + 2 reduced [2Fe-2S]-[ferredoxin]. It participates in protein modification; protein lipoylation via endogenous pathway; protein N(6)-(lipoyl)lysine from octanoyl-[acyl-carrier-protein]: step 2/2. Its function is as follows. Catalyzes the radical-mediated insertion of two sulfur atoms into the C-6 and C-8 positions of the octanoyl moiety bound to the lipoyl domains of lipoate-dependent enzymes, thereby converting the octanoylated domains into lipoylated derivatives. This is Lipoyl synthase from Vibrio cholerae serotype O1 (strain ATCC 39541 / Classical Ogawa 395 / O395).